We begin with the raw amino-acid sequence, 101 residues long: MDKSKQLFRKSKGSFRRRLPPIGSGDRIDYRNMSLISRFISEQGKILSRRVNRLTLKQQRLITIAIKQARILFSLPFLNNEKQFERTESIPRPTGPRSRNK.

Over residues methionine 1 to leucine 19 the composition is skewed to basic residues. The segment at methionine 1–glycine 23 is disordered.

The protein belongs to the bacterial ribosomal protein bS18 family. As to quaternary structure, part of the 30S ribosomal subunit.

Its subcellular location is the plastid. The protein resides in the chloroplast. This chain is Small ribosomal subunit protein bS18c, found in Acorus gramineus (Dwarf sweet flag).